We begin with the raw amino-acid sequence, 233 residues long: Probable fimbrial chaperone protein ElfD (233 aa).

The N-terminal stretch at 1-26 (MKTCITKGIVTVSLTAILLSCSSAWA) is a signal peptide.

Belongs to the periplasmic pilus chaperone family.

The protein resides in the periplasm. In terms of biological role, part of the elfADCG-ycbUVF fimbrial operon, which promotes adhesion of bacteria to different abiotic surfaces. Could be required for the biogenesis of the ElfA fimbriae. The chain is Probable fimbrial chaperone protein ElfD (elfD) from Escherichia coli (strain K12).